The sequence spans 239 residues: Glucosamine-6-phosphate deaminase (239 aa).

The Proton acceptor; for enolization step role is filled by Asp-62. Asn-128 functions as the For ring-opening step in the catalytic mechanism. The active-site Proton acceptor; for ring-opening step is the His-130. The active-site For ring-opening step is the Glu-135.

This sequence belongs to the glucosamine/galactosamine-6-phosphate isomerase family. NagB subfamily.

It carries out the reaction alpha-D-glucosamine 6-phosphate + H2O = beta-D-fructose 6-phosphate + NH4(+). It participates in amino-sugar metabolism; N-acetylneuraminate degradation; D-fructose 6-phosphate from N-acetylneuraminate: step 5/5. In terms of biological role, catalyzes the reversible isomerization-deamination of glucosamine 6-phosphate (GlcN6P) to form fructose 6-phosphate (Fru6P) and ammonium ion. The chain is Glucosamine-6-phosphate deaminase from Lactobacillus johnsonii (strain CNCM I-12250 / La1 / NCC 533).